Consider the following 47-residue polypeptide: PhoP/PhoQ regulator MgrB (47 aa).

A helical transmembrane segment spans residues 6 to 26 (WAILLAVLVACLLLWMQTLNV).

This sequence belongs to the MgrB family. May form homooligomers. Probably interacts with the periplasmic domain of PhoQ.

It localises to the cell inner membrane. PhoP-regulated transcription is redox-sensitive, being activated when the periplasm becomes more reducing. MgrB acts between DsbA/DsbB and PhoP/PhoQ in this pathway. Represses PhoP/PhoQ signaling, possibly by binding to the periplasmic domain of PhoQ, altering its activity and that of downstream effector PhoP. This Cronobacter sakazakii (strain ATCC BAA-894) (Enterobacter sakazakii) protein is PhoP/PhoQ regulator MgrB.